The chain runs to 201 residues: Alpha-1-acid glycoprotein 1 (201 aa).

The signal sequence occupies residues 1–18 (MALSWVLTVLSLLPLLEA). Pyrrolidone carboxylic acid is present on glutamine 19. Cystine bridges form between cysteine 23-cysteine 165 and cysteine 90-cysteine 183. A glycan (N-linked (GlcNAc...) (complex) asparagine) is linked at asparagine 33. Residue asparagine 56 is glycosylated (N-linked (GlcNAc...) asparagine). The N-linked (GlcNAc...) (complex) asparagine glycan is linked to asparagine 72. N-linked (GlcNAc...) asparagine glycosylation is found at asparagine 93 and asparagine 103.

This sequence belongs to the calycin superfamily. Lipocalin family. Post-translationally, N-glycosylated. N-glycan heterogeneity at Asn-33: Hex5HexNAc4 (minor), Hex6HexNAc5 (major) and dHex1Hex6HexNAc5 (minor). Expressed by the liver and secreted in plasma.

The protein resides in the secreted. Its function is as follows. Functions as a transport protein in the blood stream. Binds various ligands in the interior of its beta-barrel domain. Also binds synthetic drugs and influences their distribution and availability in the body. Appears to function in modulating the activity of the immune system during the acute-phase reaction. This Homo sapiens (Human) protein is Alpha-1-acid glycoprotein 1 (ORM1).